A 471-amino-acid polypeptide reads, in one-letter code: Abscission/NoCut checkpoint regulator (471 aa).

The interval 39–64 (GGAGQGREGRSWGEGPRGPGLGRRDL) is disordered. An FYVE-type zinc finger spans residues 74–133 (ATMESRCYGCAVKFTLFKKEYGCKNCGRAFCSGCLSFSAAVPRTGNTQQKVCKQCHEVLT). Residues C80, C83, C96, C99, C104, C107, C125, and C128 each coordinate Zn(2+). S144 is subject to Phosphoserine. The MIM1-A motif lies at 174 to 187 (DQMIAERLARLRQE). K207 participates in a covalent cross-link: Glycyl lysine isopeptide (Lys-Gly) (interchain with G-Cter in SUMO2). The residue at position 243 (T243) is a Phosphothreonine. Residues 271-299 (KGGGPAASLQNDLNQGGPGSTNSKRQANW) form a disordered region. Residues 278-299 (SLQNDLNQGGPGSTNSKRQANW) show a composition bias toward polar residues. 2 positions are modified to phosphoserine: G286 and S293. Positions 311 to 375 (EAALELREEN…RVLQQLTEEA (65 aa)) form a coiled coil. Positions 326–339 (ILALAKRLAMLRGQ) match the MIM1-B motif. Residue S354 is modified to Phosphoserine. Positions 386-412 (PAEQASRPWTQPRGAEPEAQDVDPRPE) are disordered. Position 463 is a phosphoserine (S463).

As to quaternary structure, interacts (via MIM1-B) with VPS4A; interaction takes place at the midbody ring following cytokinesis checkpoint activation. Post-translationally, phosphorylated in vitro at Ser-22 by AURKB; however, phosphorylation at this site could not be confirmed in vivo. In terms of tissue distribution, detected in brain, heart, skeletal muscle and kidney. Expressed in the liver (at protein level).

It localises to the cytoplasm. Its subcellular location is the cytoskeleton. It is found in the microtubule organizing center. The protein localises to the centrosome. The protein resides in the cleavage furrow. It localises to the midbody. Its subcellular location is the midbody ring. Its function is as follows. Key regulator of abscission step in cytokinesis: part of the cytokinesis checkpoint, a process required to delay abscission to prevent both premature resolution of intercellular chromosome bridges and accumulation of DNA damage. Together with CHMP4C, required to retain abscission-competent VPS4 (VPS4A and/or VPS4B) at the midbody ring until abscission checkpoint signaling is terminated at late cytokinesis. Deactivation of AURKB results in dephosphorylation of CHMP4C followed by its dissociation from ZFYVE19/ANCHR and VPS4 and subsequent abscission. This is Abscission/NoCut checkpoint regulator (ZFYVE19) from Homo sapiens (Human).